Consider the following 577-residue polypeptide: MTLHWSLLLFIAIALVSSVAQAAVVEHTFNVGNFSISQLCQPPLIITAVNGQLPGPTIYAREGDTVVVHLVNTSPYSMTLHWHGVLQRGTPWADGPAMVTQCPVQPGGNYTYRFNVDGQEGTLWWHAHVSFHRATVYGALVIRPRGGAKAYPFPKPDKEHVVILGEWWNATVYDMERMAFLTGIPAPHADAYTINGKPGDFYNCSAPNQTAKFEVRQNGTYLLRIINAGMNTPLFFKVAKHRLTVVGADACYTKPYKTDVVVVSPGQTVDALMVASAAVGRYYMAASPYDSAIPQGPPFSDTTATAILQYAGARRKTVRWRPPVLPRRPPVNDTATAHRFFSGMTALLRHGKPSAVPLAVDTHMYVTVGLGVSLCQPEQLLCNRSAPPVFSSSMNNASFVVPKNTSLLEAHFRREPAGVYTRDFPDTPPVVFDYTGDESDNATMQFTTKSTKVKTLRYNETVEMVLQNTRLIAKESHPMHIHGFNFFILAQGFGNYDKRRAERRFNLVDPQERNTIAVPTGGWAVIRFVADNPGMWYMHCHFDAHISLGLAMVLEVLDGPTPETSVPPPPADLPRCS.

The N-terminal stretch at 1-22 (MTLHWSLLLFIAIALVSSVAQA) is a signal peptide. 2 consecutive Plastocyanin-like domains span residues 30-147 (NVGN…PRGG) and 158-313 (KEHV…YAGA). Residue Asn-33 is glycosylated (N-linked (GlcNAc...) asparagine). His-81 and His-83 together coordinate Cu cation. Asn-109 carries N-linked (GlcNAc...) asparagine glycosylation. The Cu cation site is built by His-126 and His-128. Residues Asn-169, Asn-203, Asn-208, Asn-218, Asn-332, Asn-383, Asn-396, Asn-404, Asn-441, and Asn-459 are each glycosylated (N-linked (GlcNAc...) asparagine). In terms of domain architecture, Plastocyanin-like 3 spans 423–560 (DFPDTPPVVF…AMVLEVLDGP (138 aa)). 7 residues coordinate Cu cation: His-477, His-480, His-482, His-539, Cys-540, His-541, and His-545.

This sequence belongs to the multicopper oxidase family. It depends on Cu cation as a cofactor.

Its subcellular location is the secreted. It localises to the extracellular space. The protein localises to the apoplast. The catalysed reaction is 4 hydroquinone + O2 = 4 benzosemiquinone + 2 H2O. In terms of biological role, lignin degradation and detoxification of lignin-derived products. The chain is Laccase-25 (LAC25) from Oryza sativa subsp. japonica (Rice).